A 293-amino-acid polypeptide reads, in one-letter code: Homoserine kinase (293 aa).

Residue 83–93 (PITRGMGSSSA) coordinates ATP.

This sequence belongs to the GHMP kinase family. Homoserine kinase subfamily.

It is found in the cytoplasm. It catalyses the reaction L-homoserine + ATP = O-phospho-L-homoserine + ADP + H(+). Its pathway is amino-acid biosynthesis; L-threonine biosynthesis; L-threonine from L-aspartate: step 4/5. Functionally, catalyzes the ATP-dependent phosphorylation of L-homoserine to L-homoserine phosphate. This Helicobacter pylori (strain J99 / ATCC 700824) (Campylobacter pylori J99) protein is Homoserine kinase.